A 1550-amino-acid chain; its full sequence is Adhesion G protein-coupled receptor L3 (1550 aa).

The first 19 residues, 1–19 (MCPPQLFILMMLLAPVVHG), serve as a signal peptide directing secretion. The Extracellular portion of the chain corresponds to 20–948 (GKHNERHPAL…VHDLLLDVIT (929 aa)). The disordered stretch occupies residues 34–80 (RHAEHSPGGPLPPRHLLQQPAAERSTAHRGQGPRGTARGVRGPGAPG). Residues 103-192 (SCESYPIELR…KYLEVQYECV (90 aa)) form the SUEL-type lectin domain. Cystine bridges form between Cys-104–Cys-134, Cys-113–Cys-191, Cys-146–Cys-178, Cys-159–Cys-165, and Cys-203–Cys-385. N-linked (GlcNAc...) asparagine glycosylation occurs at Asn-161. Residues 202-461 (LCPGLLKGVY…VVKYSLDFGP (260 aa)) form the Olfactomedin-like domain. Residues 317–347 (YHDTSPYRWGGKSDIDLAVDENGLWVIYATE) are interaction with FLRT3. Residues Asp-332, Asn-380, Ala-381, and Val-435 each coordinate Ca(2+). Residues 518 to 538 (NLGRSTTPSLPGRRNRSTSTP) are disordered. 5 N-linked (GlcNAc...) asparagine glycosylation sites follow: Asn-532, Asn-616, Asn-839, Asn-884, and Asn-910. Residues 755 to 934 (DIVRENTDNI…AVLMAHVEVK (180 aa)) enclose the GAIN-B domain. 2 disulfides stabilise this stretch: Cys-885/Cys-916 and Cys-904/Cys-918. Residues 885-934 (CSFWSYSKRTMTGYWSTQGCRLLTTNKTHTTCSCNHLTNFAVLMAHVEVK) form a GPS region. The stachel stretch occupies residues 922–938 (TNFAVLMAHVEVKHSDA). A helical membrane pass occupies residues 949-969 (WVGILLSLVCLLICIFTFCFF). The Cytoplasmic segment spans residues 970-977 (RGLQSDRN). The chain crosses the membrane as a helical span at residues 978-998 (TIHKNLCISLFVAELLFLIGI). An N-linked (GlcNAc...) asparagine glycan is attached at Asn-999. The Extracellular portion of the chain corresponds to 999–1006 (NRTDQPIA). Residues 1007–1027 (CAVFAALLHFFFLAAFTWMFL) traverse the membrane as a helical segment. Over 1028–1048 (EGVQLYIMLVEVFESEHSRRK) the chain is Cytoplasmic. Residues 1049–1069 (YFYLVGYGMPALIVAVSAAVD) form a helical membrane-spanning segment. The Extracellular portion of the chain corresponds to 1070–1087 (YRSYGTDKVCWLRLDTYF). The chain crosses the membrane as a helical span at residues 1088–1108 (IWSFIGPATLIIMLNVIFLGI). Topologically, residues 1109-1141 (ALYKMFHHTAILKPESGCLDNINYEDNRPFIKS) are cytoplasmic. The chain crosses the membrane as a helical span at residues 1142 to 1162 (WVIGAIALLCLLGLTWAFGLM). Topologically, residues 1163 to 1168 (YINEST) are extracellular. N-linked (GlcNAc...) asparagine glycosylation is present at Asn-1165. The helical transmembrane segment at 1169 to 1189 (VIMAYLFTIFNSLQGMFIFIF) threads the bilayer. Topologically, residues 1190-1550 (HCVLQKKVRK…KGPAHLVTSL (361 aa)) are cytoplasmic. The segment at 1213-1236 (KSTESSIGSGKTSGSRTPGRYSTG) is disordered. At Ser-1253 the chain carries Phosphoserine. 2 disordered regions span residues 1410–1435 (LLPP…PQDH) and 1528–1550 (PPNK…VTSL). Ser-1535 is modified (phosphoserine). Residues 1545–1550 (HLVTSL) carry the PDZ-binding motif.

Belongs to the G-protein coupled receptor 2 family. LN-TM7 subfamily. Heterodimer of 2 chains generated by proteolytic processing; the large extracellular N-terminal fragment and the membrane-bound C-terminal fragment predominantly remain associated and non-covalently linked. Interacts (via olfactomedin-like domain) with FLRT1 (via extracellular domain). Interacts (via olfactomedin-like domain) with FLRT2 (via extracellular domain). Interacts (via olfactomedin-like domain) with FLRT3 (via extracellular domain); the interaction is direct. Interacts (via extracellular domain) with TENM1. Interacts (via extracellular domain) with TENM2. Interacts (via extracellular domain) with TENM3. Identified in a complex with FLRT3 and UNC5B; does not interact with UNC5B by itself. Identified in a complex with FLRT3 and UNC5D; does not interact with UNC5D by itself. As to quaternary structure, interacts (via PDZ-binding motif) with SHANK3. Interacts (via PDZ-binding motif) with DLG4. In terms of processing, autoproteolytically processed at the GPS region of the GAIN-B domain; this cleavage modulates receptor activity. Predominantly expressed in brain, followed by heart, placenta, pancreas, kidney and testis.

The protein localises to the cell membrane. Its subcellular location is the postsynaptic cell membrane. It is found in the cell projection. The protein resides in the axon. It localises to the cell junction. Its activity is regulated as follows. Forms a heterodimer of 2 chains generated by proteolytic processing that remain associated through non-covalent interactions mediated by the GAIN-B domain. In the inactivated receptor, the Stachel sequence (also named stalk) is embedded in the GAIN-B domain, where it adopts a beta-strand conformation. On activation, the Stachel moves into the 7 transmembrane region and adopts a twisted hook-shaped configuration that forms contacts within the receptor, leading to coupling of a G-alpha protein, which activates signaling. The cleaved GAIN-B and N-terminal domains can then dissociate from the rest of the receptor. In terms of biological role, orphan adhesion G-protein coupled receptor (aGPCR), which mediates synapse specificity. Ligand binding causes a conformation change that triggers signaling via guanine nucleotide-binding proteins (G proteins) and modulates the activity of downstream effectors. ADGRL3 is coupled with different classes of G alpha proteins, such as G(12)/G(13), G(s), G(i) or G(q), depending on the context. Coupling to G(12)/G(13) G proteins, which mediates the activation Rho small GTPases is the most efficient. Following G-protein coupled receptor activation, associates with cell adhesion molecules that are expressed at the surface of adjacent cells to direct synapse specificity. Specifically mediates the establishment of Schaffer-collateral synapses formed by CA3-region axons on CA1-region pyramidal neurons in the hippocampus. Localizes to postsynaptic spines in excitatory synapses in the S.oriens and S.radiatum and interacts with presynaptic cell adhesion molecules FLRT3 and TENM2, promoting synapse formation. Plays a role in the development of glutamatergic synapses in the cortex. Important in determining the connectivity rates between the principal neurons in the cortex. Functionally, orphan adhesion G-protein coupled receptor (aGPCR), which mediates synapse specificity. Ligand binding causes a conformation change that triggers signaling via guanine nucleotide-binding proteins (G proteins) and modulates the activity of downstream effectors, such as adenylate cyclase. Isoform 1 is specifically coupled to G(s) G proteins and mediates activation of adenylate cyclase activity. Following G-protein coupled receptor activation, undergoes liquid-liquid phase transition, associates with (1) cell adhesion molecules that are expressed at the surface of adjacent cells, as well as (2) PDZ-containing proteins, such as SHANK3 and DLG4, in the cytoplasm to direct synapse formation. The chain is Adhesion G protein-coupled receptor L3 from Rattus norvegicus (Rat).